Here is a 163-residue protein sequence, read N- to C-terminus: Cyclic pyranopterin monophosphate synthase (163 aa).

Substrate is bound by residues 75 to 77 (LCH) and 113 to 114 (ME). Asp-128 is an active-site residue.

It belongs to the MoaC family. As to quaternary structure, homohexamer; trimer of dimers.

The catalysed reaction is (8S)-3',8-cyclo-7,8-dihydroguanosine 5'-triphosphate = cyclic pyranopterin phosphate + diphosphate. It participates in cofactor biosynthesis; molybdopterin biosynthesis. Its function is as follows. Catalyzes the conversion of (8S)-3',8-cyclo-7,8-dihydroguanosine 5'-triphosphate to cyclic pyranopterin monophosphate (cPMP). The chain is Cyclic pyranopterin monophosphate synthase from Jannaschia sp. (strain CCS1).